The following is a 74-amino-acid chain: Defensin Lc-def (74 aa).

The signal sequence occupies residues 1–27 (MEKKTVAALSFLFIVLFVAQEIAVTEA). 4 disulfides stabilise this stretch: Cys-30–Cys-74, Cys-41–Cys-62, Cys-47–Cys-68, and Cys-51–Cys-70.

The protein resides in the secreted. Functionally, has antifungal activity against the phytopathogenic fungus A.niger VKM F-2259, but not against A.alternata VKM F-3047. Does not inhibit trypsin or chymotrypsin. This chain is Defensin Lc-def, found in Lens culinaris subsp. culinaris (Cultivated lentil).